Consider the following 327-residue polypeptide: Complex I intermediate-associated protein 30, mitochondrial (327 aa).

The transit peptide at Met1–Leu24 directs the protein to the mitochondrion. The interval Pro42 to His63 is disordered. The span at Arg53–His63 shows a compositional bias: basic and acidic residues. At Ser318 the chain carries Phosphoserine.

The protein belongs to the CIA30 family. In terms of assembly, part of the mitochondrial complex I assembly/MCIA complex that comprises at least the core subunits TMEM126B, NDUFAF1, ECSIT and ACAD9 and complement subunits such as COA1 and TMEM186. Interacts with ECSIT. Interacts with ACAD9. At early stages of complex I assembly, it is found in intermediate subcomplexes that contain different subunits including NDUFB6, NDUFA6, NDUFA9, NDUFS3, NDUFS7, ND1, ND2 and ND3. Interacts with TMEM70 and TMEM242.

The protein resides in the mitochondrion. It localises to the mitochondrion matrix. In terms of biological role, as part of the MCIA complex, involved in the assembly of the mitochondrial complex I. This chain is Complex I intermediate-associated protein 30, mitochondrial, found in Gorilla gorilla gorilla (Western lowland gorilla).